A 607-amino-acid polypeptide reads, in one-letter code: Elongation factor 4 (607 aa).

Residues 11–193 (ENIRNFSIIA…KIVEVVPAPD (183 aa)) form the tr-type G domain. GTP contacts are provided by residues 23 to 28 (DHGKST) and 140 to 143 (NKID).

This sequence belongs to the TRAFAC class translation factor GTPase superfamily. Classic translation factor GTPase family. LepA subfamily.

It is found in the cell membrane. It carries out the reaction GTP + H2O = GDP + phosphate + H(+). Its function is as follows. Required for accurate and efficient protein synthesis under certain stress conditions. May act as a fidelity factor of the translation reaction, by catalyzing a one-codon backward translocation of tRNAs on improperly translocated ribosomes. Back-translocation proceeds from a post-translocation (POST) complex to a pre-translocation (PRE) complex, thus giving elongation factor G a second chance to translocate the tRNAs correctly. Binds to ribosomes in a GTP-dependent manner. The sequence is that of Elongation factor 4 from Staphylococcus aureus (strain N315).